We begin with the raw amino-acid sequence, 85 residues long: RNA-binding protein Hfq (85 aa).

Positions Asp-9–Val-68 constitute a Sm domain.

It belongs to the Hfq family. Homohexamer.

Functionally, RNA chaperone that binds small regulatory RNA (sRNAs) and mRNAs to facilitate mRNA translational regulation in response to envelope stress, environmental stress and changes in metabolite concentrations. Also binds with high specificity to tRNAs. The sequence is that of RNA-binding protein Hfq from Tolumonas auensis (strain DSM 9187 / NBRC 110442 / TA 4).